Consider the following 572-residue polypeptide: Sialate:O-sulfotransferase 1 (572 aa).

Residues 1 to 14 (MAKPFFRLQKFLRR) lie on the Cytoplasmic side of the membrane. Residues 15-35 (TQFLLLFLTAAYLMTGSLLLL) form a helical; Signal-anchor for type II membrane protein membrane-spanning segment. Residues 36 to 572 (QRARVALPQA…AGLPREYVPR (537 aa)) lie on the Extracellular side of the membrane. Residue Asn-105 is glycosylated (N-linked (GlcNAc...) asparagine). Positions 116–135 (HLTSDPQGPPTLGPEASGPA) are disordered. 2 consecutive WSC domains span residues 139–231 (QGNY…YSVG) and 242–337 (TATY…DTRC). 2 N-linked (GlcNAc...) asparagine glycosylation sites follow: Asn-254 and Asn-345.

Belongs to the WSCD family.

Its subcellular location is the golgi apparatus membrane. It catalyses the reaction a ganglioside GM1b + 3'-phosphoadenylyl sulfate = an 8-O-sulfo-ganglioside GM1b + adenosine 3',5'-bisphosphate + H(+). In terms of biological role, sialate:O-sulfotransferase which catalyzes 8-O-sulfation at the Sia-glycan level using 3'-phosphoadenosine 5'-phosphosulfate (PAPS) as a donor, forming 8-O-sulfated Sia (Sia8S)-glycans. Displays selectivity toward glycolipids such as GM1 gangliosides. In Rattus norvegicus (Rat), this protein is Sialate:O-sulfotransferase 1 (Wscd1).